The sequence spans 341 residues: Barley B recombinant-like protein A (341 aa).

The span at 48 to 62 (HQHQQHVPHHHHQPH) shows a compositional bias: basic residues. Disordered regions lie at residues 48–95 (HQHQ…MNFA) and 150–234 (MQQQ…RKNI). Residues 68-77 (GANGNANGGA) show a composition bias toward low complexity. A compositionally biased stretch (pro residues) spans 78-90 (MPPPPATEAPPSM). Residues 190–211 (PKKRQQGRQPKVPRAKKPKKSA) are compositionally biased toward basic residues.

Belongs to the BBR/BPC family.

The protein resides in the nucleus. Transcriptional regulator that specifically binds to GA-rich elements (GAGA-repeats) present in regulatory sequences of genes involved in developmental processes. This is Barley B recombinant-like protein A from Oryza sativa subsp. japonica (Rice).